The primary structure comprises 268 residues: ClpXP adapter protein SpxH (268 aa).

Belongs to the SpxH family. Interacts with Spx.

Its subcellular location is the cytoplasm. Adapter protein required for efficient degradation of Spx by ClpXP under non-stress conditions. Interaction with Spx stabilizes Spx and exposes the C-terminus of Spx for recognition and proteolysis by ClpXP. The sequence is that of ClpXP adapter protein SpxH from Staphylococcus aureus (strain MRSA252).